Reading from the N-terminus, the 328-residue chain is Beta-ketoacyl-[acyl-carrier-protein] synthase III (328 aa).

Active-site residues include C122 and H255. Residues 256–260 are ACP-binding; sequence QANVR. Residue N285 is part of the active site.

It belongs to the thiolase-like superfamily. FabH family. In terms of assembly, homodimer.

It is found in the cytoplasm. It carries out the reaction malonyl-[ACP] + acetyl-CoA + H(+) = 3-oxobutanoyl-[ACP] + CO2 + CoA. It participates in lipid metabolism; fatty acid biosynthesis. Functionally, catalyzes the condensation reaction of fatty acid synthesis by the addition to an acyl acceptor of two carbons from malonyl-ACP. Catalyzes the first condensation reaction which initiates fatty acid synthesis and may therefore play a role in governing the total rate of fatty acid production. Possesses both acetoacetyl-ACP synthase and acetyl transacylase activities. Its substrate specificity determines the biosynthesis of branched-chain and/or straight-chain of fatty acids. The sequence is that of Beta-ketoacyl-[acyl-carrier-protein] synthase III from Bordetella avium (strain 197N).